Consider the following 244-residue polypeptide: INO80 complex subunit E (244 aa).

Positions 10-54 (DYKKKYRNLKRKLKFLIYEHECFQEELRKAQRKLLKVSRDKSFLL) form a coiled coil. The tract at residues 63–236 (VDEDSSDSDA…SGDDALDGDD (174 aa)) is disordered. The span at 99–115 (PPLGGAPSPSSLSLPPS) shows a compositional bias: low complexity. Residues 157 to 171 (RPKREKRPRLPRKLK) are compositionally biased toward basic residues. Residues K159 and K171 each participate in a glycyl lysine isopeptide (Lys-Gly) (interchain with G-Cter in SUMO2) cross-link. Residues 202–212 (PLPPPKMPPPT) show a composition bias toward pro residues.

As to quaternary structure, component of the chromatin remodeling INO80 complex; specifically part of a complex module associated with the N-terminus of INO80.

It localises to the nucleus. Putative regulatory component of the chromatin remodeling INO80 complex which is involved in transcriptional regulation, DNA replication and probably DNA repair. The polypeptide is INO80 complex subunit E (INO80E) (Homo sapiens (Human)).